A 379-amino-acid polypeptide reads, in one-letter code: Chaperone protein DnaJ (379 aa).

Residues 5–70 (DYYEVLGVSR…QKRAAYDQYG (66 aa)) form the J domain. The CR-type zinc finger occupies 134–212 (GVTKEIRIPT…CHGHGRVEKS (79 aa)). 8 residues coordinate Zn(2+): Cys147, Cys150, Cys164, Cys167, Cys186, Cys189, Cys200, and Cys203. CXXCXGXG motif repeat units lie at residues 147 to 154 (CDVCHGSG), 164 to 171 (CPTCHGAG), 186 to 193 (CPHCHGRG), and 200 to 207 (CNKCHGHG).

Belongs to the DnaJ family. As to quaternary structure, homodimer. Requires Zn(2+) as cofactor.

It is found in the cytoplasm. Participates actively in the response to hyperosmotic and heat shock by preventing the aggregation of stress-denatured proteins and by disaggregating proteins, also in an autonomous, DnaK-independent fashion. Unfolded proteins bind initially to DnaJ; upon interaction with the DnaJ-bound protein, DnaK hydrolyzes its bound ATP, resulting in the formation of a stable complex. GrpE releases ADP from DnaK; ATP binding to DnaK triggers the release of the substrate protein, thus completing the reaction cycle. Several rounds of ATP-dependent interactions between DnaJ, DnaK and GrpE are required for fully efficient folding. Also involved, together with DnaK and GrpE, in the DNA replication of plasmids through activation of initiation proteins. This is Chaperone protein DnaJ from Yersinia pestis bv. Antiqua (strain Antiqua).